The following is a 140-amino-acid chain: MSFASEFKAFALKGNVVDLAVGVIIGAAFGKIVDSIVNDLVMPVVGAIFGGLDFKDYFVALKEIPPGVPHALDAVKKAGVPVFAYGSFLTIVLNFLILAFIIFLMVKQFNRMKRAEPAPAPAAPPEQVVLLREIRDALRR.

Transmembrane regions (helical) follow at residues 16–36 and 86–106; these read VVDLAVGVIIGAAFGKIVDSI and GSFLTIVLNFLILAFIIFLMV.

It belongs to the MscL family. In terms of assembly, homopentamer.

The protein resides in the cell inner membrane. Its function is as follows. Channel that opens in response to stretch forces in the membrane lipid bilayer. May participate in the regulation of osmotic pressure changes within the cell. This is Large-conductance mechanosensitive channel from Anaeromyxobacter sp. (strain K).